Reading from the N-terminus, the 481-residue chain is UDP-N-acetylmuramoylalanine--D-glutamate ligase (481 aa).

108 to 114 is a binding site for ATP; it reads GTNGKTS.

It belongs to the MurCDEF family.

Its subcellular location is the cytoplasm. It carries out the reaction UDP-N-acetyl-alpha-D-muramoyl-L-alanine + D-glutamate + ATP = UDP-N-acetyl-alpha-D-muramoyl-L-alanyl-D-glutamate + ADP + phosphate + H(+). The protein operates within cell wall biogenesis; peptidoglycan biosynthesis. Functionally, cell wall formation. Catalyzes the addition of glutamate to the nucleotide precursor UDP-N-acetylmuramoyl-L-alanine (UMA). The chain is UDP-N-acetylmuramoylalanine--D-glutamate ligase from Bifidobacterium longum subsp. infantis (strain ATCC 15697 / DSM 20088 / JCM 1222 / NCTC 11817 / S12).